The following is a 222-amino-acid chain: Lipid transferase CIDEC (222 aa).

The span at 1–19 (MAMYTAVSTSVVTQQQLSE) shows a compositional bias: polar residues. 2 disordered regions span residues 1-33 (MAMYTAVSTSVVTQQQLSEPSAEAPRARPCRVT) and 203-222 (EQPPKSKAASLIPTSLKMLQ). The required for liquid-liquid phase separation (LLPS) stretch occupies residues 1–33 (MAMYTAVSTSVVTQQQLSEPSAEAPRARPCRVT). In terms of domain architecture, CIDE-N spans 26 to 103 (RARPCRVTTA…VLHKGQKWQP (78 aa)).

The protein belongs to the CIDE family. Homodimer. Homooligomer; undergoes liquid-liquid phase separation (LLPS) via its N-terminus, facilitating lipid droplet fusion, occurs at the lipid droplet contact sites. Interacts with CIDEA. Interacts with PLIN1. Interacts with NFAT5; this interaction is direct and retains NFAT5 in the cytoplasm. Interacts with CEBPB. Interacts with isoform CLSTN3beta of CLSTN3; inhibiting the lipid transferase activity of CIDEC. Ubiquitinated and targeted to proteasomal degradation, resulting in a short half-life (about 15 minutes in 3T3-L1 cells). Protein stability depends on triaclyglycerol synthesis, fatty acid availability and lipid droplet formation.

It localises to the lipid droplet. The protein localises to the endoplasmic reticulum. The protein resides in the nucleus. The catalysed reaction is a triacyl-sn-glycerol(in) = a triacyl-sn-glycerol(out). In terms of biological role, lipid transferase specifically expressed in white adipose tissue, which promotes unilocular lipid droplet formation by mediating lipid droplet fusion. Lipid droplet fusion promotes their enlargement, restricting lipolysis and favoring lipid storage. Localizes on the lipid droplet surface, at focal contact sites between lipid droplets, and mediates atypical lipid droplet fusion by undergoing liquid-liquid phase separation (LLPS) and promoting directional net neutral lipid transfer from the smaller to larger lipid droplets. The transfer direction may be driven by the internal pressure difference between the contacting lipid droplet pair. Its role in neutral lipid transfer and lipid droplet enlargement is activated by the interaction with PLIN1. May also act as a CEBPB coactivator in the white adipose tissue to control the expression of a subset of CEBPB downstream target genes, including SOCS1, SOCS3, TGFB1, TGFBR1, ID2 and XDH. When overexpressed in preadipocytes, induces apoptosis or increases cell susceptibility to apoptosis induced by serum deprivation or TGFB treatment. This is Lipid transferase CIDEC from Bos taurus (Bovine).